A 63-amino-acid chain; its full sequence is Overexpressed in colon carcinoma 1 protein homolog (63 aa).

Residues 1–10 show a composition bias toward polar residues; sequence MGCGNSTATS. Residues 1–37 are disordered; it reads MGCGNSTATSAAAGRGKPGAVKDATEDSITEDDKRRN.

The protein belongs to the OCC1 family.

The sequence is that of Overexpressed in colon carcinoma 1 protein homolog from Rattus norvegicus (Rat).